The following is a 619-amino-acid chain: Serine/threonine-protein kinase pkn1 (619 aa).

The 288-residue stretch at 15–302 folds into the Protein kinase domain; the sequence is YRILYRKGQS…SSQNLPQAVL (288 aa). ATP is bound at residue 21–29; that stretch reads KGQSLWSED. Glu141 serves as the catalytic Proton acceptor.

The protein belongs to the protein kinase superfamily. Ser/Thr protein kinase family. Autophosphorylated on serine and threonine residues.

It catalyses the reaction L-seryl-[protein] + ATP = O-phospho-L-seryl-[protein] + ADP + H(+). The catalysed reaction is L-threonyl-[protein] + ATP = O-phospho-L-threonyl-[protein] + ADP + H(+). In terms of biological role, together with the serine/threonine kinase PknD, may play a role in the specific interactions with host proteins during intracellular growth. The chain is Serine/threonine-protein kinase pkn1 (pkn1) from Chlamydia pneumoniae (Chlamydophila pneumoniae).